Reading from the N-terminus, the 1203-residue chain is DNA-directed RNA polymerase subunit beta (1203 aa).

Basic and acidic residues predominate over residues 1174–1195 (AAQEAKAAFEAEEAEKATKAEA). The disordered stretch occupies residues 1174-1203 (AAQEAKAAFEAEEAEKATKAEATEEAAEQE).

It belongs to the RNA polymerase beta chain family. The RNAP catalytic core consists of 2 alpha, 1 beta, 1 beta' and 1 omega subunit. When a sigma factor is associated with the core the holoenzyme is formed, which can initiate transcription.

It carries out the reaction RNA(n) + a ribonucleoside 5'-triphosphate = RNA(n+1) + diphosphate. DNA-dependent RNA polymerase catalyzes the transcription of DNA into RNA using the four ribonucleoside triphosphates as substrates. In Streptococcus pneumoniae (strain P1031), this protein is DNA-directed RNA polymerase subunit beta.